The chain runs to 249 residues: 5'-nucleotidase SurE (249 aa).

The a divalent metal cation site is built by D8, D9, S39, and N91.

Belongs to the SurE nucleotidase family. It depends on a divalent metal cation as a cofactor.

The protein localises to the cytoplasm. It carries out the reaction a ribonucleoside 5'-phosphate + H2O = a ribonucleoside + phosphate. Functionally, nucleotidase that shows phosphatase activity on nucleoside 5'-monophosphates. This Pseudomonas fluorescens (strain SBW25) protein is 5'-nucleotidase SurE.